The primary structure comprises 404 residues: MNKPIPNSLRTLPDDRGRFGEFGGRFVAETLMPLILELEAAYEAAKDDPDFMREFQYYLQHYVGRPSPLWFAERLTKELGGAKVYFKRDELNHTGAHKINNCIGQILLAKRMGKTRIIAETGAGQHGVATATVAALFGLPCIVYMGATDVERQQPNVFRMKLLGAEVRPVTSGASTLKDAMNEALRDWVANVRDTFYIIGTAAGPHPYPAMVRDFQSVIGVEARAQMMEAEGRLPDVAIAAIGGGSNAIGLFHAFLDEQVKLIGVEAAGRGLDSGEHAASLSRGRPGVLHGNRTYLLQDDDGQILEAHSISAGLDYPGIGPEHSYLHDIGRVEYVSATDDEALAAFQLCCRTEGIIPALEPSHALAHVAKIAPGMDKESIILMNLCGRGDKDIFTVARHLGEQI.

Position 98 is an N6-(pyridoxal phosphate)lysine (K98).

The protein belongs to the TrpB family. As to quaternary structure, tetramer of two alpha and two beta chains. Pyridoxal 5'-phosphate is required as a cofactor.

The catalysed reaction is (1S,2R)-1-C-(indol-3-yl)glycerol 3-phosphate + L-serine = D-glyceraldehyde 3-phosphate + L-tryptophan + H2O. The protein operates within amino-acid biosynthesis; L-tryptophan biosynthesis; L-tryptophan from chorismate: step 5/5. Functionally, the beta subunit is responsible for the synthesis of L-tryptophan from indole and L-serine. The polypeptide is Tryptophan synthase beta chain (Acidiphilium cryptum (strain JF-5)).